A 536-amino-acid chain; its full sequence is Mitogen-activated protein kinase kinase kinase mom-4 (536 aa).

A compositionally biased stretch (low complexity) spans 1 to 20 (MDNSSQSKPSSSSSSHSPSP). A disordered region spans residues 1–34 (MDNSSQSKPSSSSSSHSPSPAAITPTQRTTRDSG). The Protein kinase domain maps to 51 to 305 (NLNSHYLGKG…SSECVEYFTL (255 aa)). Residues 57 to 65 (LGKGTYGLV) and Lys84 contribute to the ATP site. The active-site Proton acceptor is the Asp176. The interval 314 to 438 (SVPLSDSSTN…EHRRDSNDEE (125 aa)) is disordered. Composition is skewed to polar residues over residues 315-325 (VPLSDSSTNGP) and 350-366 (NNRT…QQPG). Residues 405 to 438 (KNFRDRAKSEQRQPHRDARPPPPFEHRRDSNDEE) show a composition bias toward basic and acidic residues.

This sequence belongs to the protein kinase superfamily. STE Ser/Thr protein kinase family. MAP kinase kinase kinase subfamily. In terms of assembly, interacts with, and is activated by, tap-1. Mg(2+) serves as cofactor. May be autophosphorylated.

It catalyses the reaction L-seryl-[protein] + ATP = O-phospho-L-seryl-[protein] + ADP + H(+). It carries out the reaction L-threonyl-[protein] + ATP = O-phospho-L-threonyl-[protein] + ADP + H(+). Part of the Wnt signaling pathway essential for the specification of the mesodermal cell fate in early embryos. Stimulates the wrm-1/lit-1-dependent phosphorylation of pop-1 and plays a role in the initial nuclear accumulation of wrm-1. In Caenorhabditis elegans, this protein is Mitogen-activated protein kinase kinase kinase mom-4.